We begin with the raw amino-acid sequence, 431 residues long: Galactose-3-O-sulfotransferase 3 (431 aa).

At 1–19 (MPPILQRLQQSTKMMSHRK) the chain is on the cytoplasmic side. Residues 20 to 40 (ILLLVLGCSTVSLLIHQGSQL) traverse the membrane as a helical; Signal-anchor for type II membrane protein segment. Over 41-431 (SWYPKLFPLS…RALPRIPQGT (391 aa)) the chain is Lumenal. 4 N-linked (GlcNAc...) asparagine glycosylation sites follow: N91, N110, N177, and N302. Positions 400 to 431 (KRRGGVRSRPESVLDNPPPRPIRALPRIPQGT) are disordered. Over residues 421–431 (IRALPRIPQGT) the composition is skewed to low complexity.

Belongs to the galactose-3-O-sulfotransferase family. It depends on Mg(2+) as a cofactor.

It is found in the golgi apparatus. The protein localises to the golgi stack membrane. The protein operates within protein modification; carbohydrate sulfation. In terms of biological role, transfers a sulfate to position 3 of non-reducing beta-galactosyl residues in N-glycans and core2-branched O-glycans. Has high activity towards Gal-beta-1,4-GlcNAc, Gal-beta-1,4(Fuc-alpha-1,3)GlcNAc and lower activity towards Gal-beta-1,3(Fuc-alpha-1,4)GlcNAc. This is Galactose-3-O-sulfotransferase 3 (Gal3st3) from Mus musculus (Mouse).